The primary structure comprises 51 residues: Large ribosomal subunit protein bL33 (51 aa).

The protein belongs to the bacterial ribosomal protein bL33 family.

This chain is Large ribosomal subunit protein bL33, found in Ruthia magnifica subsp. Calyptogena magnifica.